A 440-amino-acid chain; its full sequence is Adenylosuccinate synthetase (440 aa).

GTP is bound by residues Gly12–Lys18 and Gly40–Thr42. Asp13 acts as the Proton acceptor in catalysis. The Mg(2+) site is built by Asp13 and Gly40. IMP-binding positions include Asp13–Lys16, Asn38–His41, Thr128, Arg142, Gln223, Thr238, and Arg302. Residue His41 is the Proton donor of the active site. Thr298–Arg304 is a binding site for substrate. Residues Arg304, Lys330–Asp332, and Ser412–Gly414 contribute to the GTP site.

The protein belongs to the adenylosuccinate synthetase family. As to quaternary structure, homodimer. The cofactor is Mg(2+).

Its subcellular location is the cytoplasm. It carries out the reaction IMP + L-aspartate + GTP = N(6)-(1,2-dicarboxyethyl)-AMP + GDP + phosphate + 2 H(+). The protein operates within purine metabolism; AMP biosynthesis via de novo pathway; AMP from IMP: step 1/2. Functionally, plays an important role in the de novo pathway of purine nucleotide biosynthesis. Catalyzes the first committed step in the biosynthesis of AMP from IMP. This is Adenylosuccinate synthetase from Gloeobacter violaceus (strain ATCC 29082 / PCC 7421).